The chain runs to 1609 residues: Chitin synthase 5 (1609 aa).

Disordered regions lie at residues M1–R188, S248–E280, and V294–T320. Over M1–G326 the chain is Cytoplasmic. Residues P34–I44 show a composition bias toward polar residues. Over residues P61 to F82 the composition is skewed to low complexity. Residues A100 to Q111 are compositionally biased toward polar residues. Over residues D134 to I146 the composition is skewed to basic and acidic residues. The span at N147–D163 shows a compositional bias: polar residues. Over residues T253–P267 the composition is skewed to low complexity. Residues P307 to T320 are compositionally biased toward basic and acidic residues. A helical membrane pass occupies residues P327–L347. Residues R348 to K364 lie on the Extracellular side of the membrane. The chain crosses the membrane as a helical span at residues M365–F385. The Cytoplasmic portion of the chain corresponds to T386 to L624. A helical membrane pass occupies residues V625 to I645. Over S646–T1176 the chain is Extracellular. An N-linked (GlcNAc...) asparagine glycan is attached at N654. The disordered stretch occupies residues G729–P767. Over residues P742–S752 the composition is skewed to low complexity. Residues N1015 and N1144 are each glycosylated (N-linked (GlcNAc...) asparagine). The helical transmembrane segment at G1177–L1197 threads the bilayer. At P1198 to T1202 the chain is on the cytoplasmic side. A helical transmembrane segment spans residues P1203 to V1223. The Extracellular segment spans residues T1224 to K1227. Residues I1228 to L1248 form a helical membrane-spanning segment. Over P1249 to D1609 the chain is Cytoplasmic. Disordered stretches follow at residues P1354 to A1381 and T1399 to D1609. Polar residues-rich tracts occupy residues N1502–E1514 and G1530–P1552. Positions A1568–A1588 are enriched in low complexity.

The protein belongs to the chitin synthase family. Class IV subfamily.

It localises to the cell membrane. Its subcellular location is the cytoplasmic vesicle membrane. It carries out the reaction [(1-&gt;4)-N-acetyl-beta-D-glucosaminyl](n) + UDP-N-acetyl-alpha-D-glucosamine = [(1-&gt;4)-N-acetyl-beta-D-glucosaminyl](n+1) + UDP + H(+). Functionally, polymerizes chitin, a structural polymer of the cell wall and septum, by transferring the sugar moiety of UDP-GlcNAc to the non-reducing end of the growing chitin polymer. In Mycosarcoma maydis (Corn smut fungus), this protein is Chitin synthase 5.